A 129-amino-acid chain; its full sequence is Protein Turandot B2 (129 aa).

A signal peptide spans 1–21 (MNSATSLMCFALLLISPLCMG).

It belongs to the Turandot family.

It is found in the secreted. Functionally, a humoral factor that may play a role in stress tolerance. The sequence is that of Protein Turandot B2 (TotB2) from Drosophila erecta (Fruit fly).